Consider the following 237-residue polypeptide: Protein-S-isoprenylcysteine O-methyltransferase (237 aa).

4 helical membrane-spanning segments follow: residues 26–46 (SSAISCGLGIGIGFGIALFIF), 53–73 (FGIYLAGLCTFHMWEYIWVTM), 92–112 (FNMALLISFIEFWIEWYFFPS), and 116–136 (FSLWWVGAICMVFGQIVRSVA). Residues Gln149, 156–159 (HVLV), Tyr164, and 169–172 (HPSY) contribute to the S-adenosyl-L-methionine site. A helical transmembrane segment spans residues 184–204 (VILMNPISIIGFGWASWSFFS). Arg206 serves as a coordination point for substrate. S-adenosyl-L-methionine is bound at residue Glu210.

Belongs to the class VI-like SAM-binding methyltransferase superfamily. Isoprenylcysteine carboxyl methyltransferase family.

It is found in the endoplasmic reticulum membrane. It carries out the reaction [protein]-C-terminal S-[(2E,6E)-farnesyl]-L-cysteine + S-adenosyl-L-methionine = [protein]-C-terminal S-[(2E,6E)-farnesyl]-L-cysteine methyl ester + S-adenosyl-L-homocysteine. Methylates the C-terminal cysteine residues of small GTPases and the heterotrimeric G protein gamma subunit in response to cAMP. The methylation is required for intercellular signaling and regulation of cAMP waves propagation. It also seems to induce the activity of car1, a G protein-coupled receptor which senses extracellular cAMP during the aggregation phase of development. This chain is Protein-S-isoprenylcysteine O-methyltransferase (icmt-1), found in Dictyostelium discoideum (Social amoeba).